The following is a 375-amino-acid chain: ATP-dependent kinase YFH7 (375 aa).

An ATP-binding site is contributed by 66–74 (GPPGSGKST).

The protein belongs to the YFH7 family.

ATP-dependent kinase that could be involved in endoplasmic reticulum membrane assembly. The chain is ATP-dependent kinase YFH7 (YFH7) from Zygosaccharomyces rouxii (strain ATCC 2623 / CBS 732 / NBRC 1130 / NCYC 568 / NRRL Y-229).